The following is a 212-amino-acid chain: Uridine kinase (212 aa).

13–20 is an ATP binding site; it reads GASASGKS.

Belongs to the uridine kinase family.

The protein localises to the cytoplasm. It catalyses the reaction uridine + ATP = UMP + ADP + H(+). The enzyme catalyses cytidine + ATP = CMP + ADP + H(+). It functions in the pathway pyrimidine metabolism; CTP biosynthesis via salvage pathway; CTP from cytidine: step 1/3. The protein operates within pyrimidine metabolism; UMP biosynthesis via salvage pathway; UMP from uridine: step 1/1. The protein is Uridine kinase of Shewanella piezotolerans (strain WP3 / JCM 13877).